A 262-amino-acid chain; its full sequence is Global transcriptional regulator CodY (262 aa).

The interval 1–159 (MATLLEKTRK…ATTVIGVQLS (159 aa)) is GAF domain. Residues 207 to 226 (ASVIADKIGITRSVIVNALR) constitute a DNA-binding region (H-T-H motif).

This sequence belongs to the CodY family.

The protein localises to the cytoplasm. DNA-binding global transcriptional regulator which is involved in the adaptive response to starvation and acts by directly or indirectly controlling the expression of numerous genes in response to nutrient availability. During rapid exponential growth, CodY is highly active and represses genes whose products allow adaptation to nutrient depletion. The protein is Global transcriptional regulator CodY of Lactococcus lactis subsp. lactis (strain IL1403) (Streptococcus lactis).